A 287-amino-acid polypeptide reads, in one-letter code: Large ribosomal subunit protein uL2 (287 aa).

Disordered stretches follow at residues 25-57 and 203-287; these read TKTE…RGGG and LSAG…GRES. 2 stretches are compositionally biased toward basic residues: residues 209-220 and 259-287; these read GRNRWKGRRPKV and TRNR…GRES.

The protein belongs to the universal ribosomal protein uL2 family. In terms of assembly, part of the 50S ribosomal subunit. Forms a bridge to the 30S subunit in the 70S ribosome.

Its function is as follows. One of the primary rRNA binding proteins. Required for association of the 30S and 50S subunits to form the 70S ribosome, for tRNA binding and peptide bond formation. It has been suggested to have peptidyltransferase activity; this is somewhat controversial. Makes several contacts with the 16S rRNA in the 70S ribosome. This is Large ribosomal subunit protein uL2 from Nostoc punctiforme (strain ATCC 29133 / PCC 73102).